Here is a 76-residue protein sequence, read N- to C-terminus: uncharacterized protein (76 aa).

This is an uncharacterized protein from Human cytomegalovirus (strain AD169) (HHV-5).